A 153-amino-acid polypeptide reads, in one-letter code: Myosin regulatory light chain LC-2, mantle muscle (153 aa).

Ala1 is modified (blocked amino end (Ala)). 2 EF-hand domains span residues 13–48 and 82–117; these read RQMQELKEAFTMIDQDRDGFIGMEDLKDMFSSLGRV and DPEDALRNAFSMFDEDGQGFIPEDYLKDLLENMGDN. Residues Asp26, Asp28, Asp30, and Asp37 each contribute to the Ca(2+) site.

Functionally, in molluscan muscle, calcium regulation is associated with myosin rather than with actin. Muscle myosin contains two types of light chains: the catalytic light chain, essential for ATPase activity, and the regulatory light chain, a calcium-binding protein responsible for Ca(2+) dependent binding and Ca(2+) dependent Mg-ATPase activity. The chain is Myosin regulatory light chain LC-2, mantle muscle from Todarodes pacificus (Japanese flying squid).